Here is a 244-residue protein sequence, read N- to C-terminus: MSRLAECTISDTVDELVQRAKLAEQAERYDDMAGACKTMAEMGNELNNEERNLLSVAYKNVLGARRSSWRIMSSIAKKQAGTPLADQTDIYLKKVEEELIPICNDVLALPVLPITEKIGAEAKIFYYKMMGDYYRYLAEVQEGEQNDKSTEAAEEANQKATSLAEAELSVTHPIRLGLALNFSVFYYEIKNMPEKACSLAKAAFDAAITEVDSIKDETYKDSTLIMQLLRDNLTLWNSECETDS.

This sequence belongs to the 14-3-3 family.

This chain is 14-3-3 protein homolog 1, found in Echinococcus multilocularis (Fox tapeworm).